A 143-amino-acid chain; its full sequence is Lysozyme C (143 aa).

Positions 1–15 are cleaved as a signal peptide; that stretch reads MRCLLLLLLVPVPGA. The C-type lysozyme domain maps to 16–143; the sequence is KVFERCEWAR…LSSYVAGCGV (128 aa). 4 disulfide bridges follow: Cys-21/Cys-141, Cys-45/Cys-129, Cys-79/Cys-94, and Cys-90/Cys-108. Residues Glu-50 and Asp-67 contribute to the active site.

Belongs to the glycosyl hydrolase 22 family. As to quaternary structure, monomer.

The protein resides in the secreted. The enzyme catalyses Hydrolysis of (1-&gt;4)-beta-linkages between N-acetylmuramic acid and N-acetyl-D-glucosamine residues in a peptidoglycan and between N-acetyl-D-glucosamine residues in chitodextrins.. Its function is as follows. Lysozymes have primarily a bacteriolytic function; those in tissues and body fluids are associated with the monocyte-macrophage system and enhance the activity of immunoagents. The chain is Lysozyme C (lys) from Scophthalmus maximus (Turbot).